The following is a 642-amino-acid chain: MPVIRFYDGSQQVYEHSVSLIEIIKNKKPSIMKSLIAISVNNHFSNLNTFIREDAFIEFVDQKNYKALNIIRYSCAQLLSYAIKNIWPLAQIATSNIIEDGFYCDIDFKRSISEKDLILLENQMKTLVKREYNILNKLISYSEAREIFQKCFEKYKVSLIDENIHCNSKVSLYYHENYADIDIGLQVFNIKFCKYFKLQKIGGVYWKKNKNNKMLQRIYGTAWTNKQELDKHLDYLNELEKRDHRKIGKFLQLYHMQEESPGMIFWHNKGWIIFNELQNFVRVKLKEYKYEEVKTPLLIDKLIWKQSGHWDNYKNAIFTTLSEHREYCIKPMNCPGHVQIFNSRLKSYRDLPIRMAEFGSCHRNEPSGSLHGLMRVRNFTQDDAHIFCTREQVRSEINDCIKMIYDLYSTFHFKKILVKLSTRPEKRIGTDSLWNESEKDLSDMLIENHLSFEYQSGEGAFYGPKIEFILQDSLDRNWQCGTIQLDFYLPLRLSSFYINEKNEKKVPVIIHRAILGSIERFIGILIEECSGNLPTWLSPVQVVIISITDISSGYVKELFKKFSDVNIRIECDLRNEKIGFKIREHTLRRIPYILICGEKESSSKKISVRNRQGHNFGMIDVDFFIKKLQKEIITRNFYQMEE.

The region spanning 1-61 (MPVIRFYDGS…REDAFIEFVD (61 aa)) is the TGS domain. Residues 243–534 (DHRKIGKFLQ…LIEECSGNLP (292 aa)) are catalytic. C334, H385, and H511 together coordinate Zn(2+).

Belongs to the class-II aminoacyl-tRNA synthetase family. In terms of assembly, homodimer. The cofactor is Zn(2+).

The protein localises to the cytoplasm. It catalyses the reaction tRNA(Thr) + L-threonine + ATP = L-threonyl-tRNA(Thr) + AMP + diphosphate + H(+). Functionally, catalyzes the attachment of threonine to tRNA(Thr) in a two-step reaction: L-threonine is first activated by ATP to form Thr-AMP and then transferred to the acceptor end of tRNA(Thr). Also edits incorrectly charged L-seryl-tRNA(Thr). This is Threonine--tRNA ligase from Buchnera aphidicola subsp. Acyrthosiphon pisum (strain Tuc7).